The following is a 387-amino-acid chain: Glucose-1-phosphate adenylyltransferase (387 aa).

Alpha-D-glucose 1-phosphate contacts are provided by residues Tyr99, Gly164, 179-180, and Ser190; that span reads EK.

It belongs to the bacterial/plant glucose-1-phosphate adenylyltransferase family. Homotetramer.

It catalyses the reaction alpha-D-glucose 1-phosphate + ATP + H(+) = ADP-alpha-D-glucose + diphosphate. It functions in the pathway glycan biosynthesis; glycogen biosynthesis. Functionally, involved in the biosynthesis of ADP-glucose, a building block required for the elongation reactions to produce glycogen. Catalyzes the reaction between ATP and alpha-D-glucose 1-phosphate (G1P) to produce pyrophosphate and ADP-Glc. This is Glucose-1-phosphate adenylyltransferase from Geobacillus stearothermophilus (Bacillus stearothermophilus).